Consider the following 497-residue polypeptide: Validamine 7-phosphate valienyltransferase (497 aa).

Residue Asp-158 participates in GDP-valienol binding. His-182 serves as a coordination point for validamine 7-phosphate. GDP-valienol contacts are provided by residues Arg-290, Lys-295, Arg-321, 325-326 (NR), 361-362 (ND), and Thr-366. Residue 383-386 (DGQN) coordinates validamine 7-phosphate. GDP-valienol contacts are provided by residues 387-388 (LS) and Glu-391.

This sequence belongs to the glycosyltransferase 20 family. Homodimer.

It carries out the reaction validamine 7-phosphate + GDP-valienol = validoxylamine A 7'-phosphate + GDP + H(+). In terms of biological role, involved in the biosynthesis of the antifungal agent validamycin A. Catalyzes the condensation between GDP-valienol and validamine 7-phosphate via a nonglycosidic C-N bond formation to yield validoxylamine A 7'-phosphate. The chain is Validamine 7-phosphate valienyltransferase from Streptomyces hygroscopicus subsp. limoneus.